Here is a 408-residue protein sequence, read N- to C-terminus: MFGGKSHILRGSVSLALIVLILLVIILLVSEENPLRDSLFEVKRQFSSSSSSSSSVCNFAKGKWVEDRKRPLYSGFECKQWLSSMWSCRIMGRPDFSFEGYRWQPEGCNMPQFDRFTFLTRMQNKTIAFIGDSLGRQQFQSLMCMASGGEDSPEVQNVGWEYGLVKAKGALRPDGWAYRFPTTNTTILYYWSASLSDLVPMNNTDPPSLTAMHLDRPPAFMRNYLHRFDVLVLNTGHHWNRGKIEGNHWVMHVNGTQVEGEYLKDIRNAKDFTIHSVAKWLDAQLPLHPRLKAFFRTISPRHFKNGDWNTGGNCNNTVPLSRGSEITGDDGSIDATVESAVNGTRIKILDITALSELRDEAHISGSKLKPRKPKKASNVTSTPTINDCLHWCLPGIPDTWNELFIAQI.

The helical; Signal-anchor for type II membrane protein transmembrane segment at 11–31 (GSVSLALIVLILLVIILLVSE) threads the bilayer. Residues 131-133 (GDS) carry the GDS motif motif. The short motif at 387-401 (DCLHWCLPGIPDTWN) is the DCXHWCLPGXXDXWN motif element.

This sequence belongs to the PC-esterase family. TBL subfamily.

It localises to the membrane. May act as a bridging protein that binds pectin and other cell wall polysaccharides. Probably involved in maintaining esterification of pectins. May be involved in the specific O-acetylation of cell wall polymers. This is Protein trichome birefringence-like 14 (TBL14) from Arabidopsis thaliana (Mouse-ear cress).